A 244-amino-acid chain; its full sequence is Glucosamine-6-phosphate deaminase (244 aa).

D67 serves as the catalytic Proton acceptor; for enolization step. N136 serves as the catalytic For ring-opening step. The active-site Proton acceptor; for ring-opening step is the H138. E143 (for ring-opening step) is an active-site residue.

This sequence belongs to the glucosamine/galactosamine-6-phosphate isomerase family. NagB subfamily.

It carries out the reaction alpha-D-glucosamine 6-phosphate + H2O = beta-D-fructose 6-phosphate + NH4(+). It participates in amino-sugar metabolism; N-acetylneuraminate degradation; D-fructose 6-phosphate from N-acetylneuraminate: step 5/5. Catalyzes the reversible isomerization-deamination of glucosamine 6-phosphate (GlcN6P) to form fructose 6-phosphate (Fru6P) and ammonium ion. The sequence is that of Glucosamine-6-phosphate deaminase from Clostridium botulinum (strain Okra / Type B1).